The primary structure comprises 532 residues: Phosphoenolpyruvate carboxykinase (ATP) (532 aa).

Substrate is bound by residues R60, Y194, and K200. Residues K200, H219, and 237–245 (GLSGTGKTT) each bind ATP. The Mn(2+) site is built by K200 and H219. D258 is a Mn(2+) binding site. E286, R324, and T449 together coordinate ATP. R324 contributes to the substrate binding site.

Belongs to the phosphoenolpyruvate carboxykinase (ATP) family. Mn(2+) is required as a cofactor.

Its subcellular location is the cytoplasm. It carries out the reaction oxaloacetate + ATP = phosphoenolpyruvate + ADP + CO2. It participates in carbohydrate biosynthesis; gluconeogenesis. Its function is as follows. Involved in the gluconeogenesis. Catalyzes the conversion of oxaloacetate (OAA) to phosphoenolpyruvate (PEP) through direct phosphoryl transfer between the nucleoside triphosphate and OAA. The polypeptide is Phosphoenolpyruvate carboxykinase (ATP) (Cereibacter sphaeroides (strain ATCC 17025 / ATH 2.4.3) (Rhodobacter sphaeroides)).